The following is an 86-amino-acid chain: Small ribosomal subunit protein bS16 (86 aa).

The protein belongs to the bacterial ribosomal protein bS16 family.

In Xylella fastidiosa (strain M12), this protein is Small ribosomal subunit protein bS16.